The following is a 340-amino-acid chain: MSATTWSASFGGIAGSDLEAELAQARTVDHDANEAADLEHAEATHHHARVAAQGHARGDAQPPAGALARDDGRRAADYSVQLRGVGKRYGEREVLSGFDLSIERGSFVAIVGRSGCGKSTLLRLVAGLEKATSGVLEKRNEEGGPLDTRIMFQDARLLPWKSVLQNVMLGLGRSAREDARAVLAEVGLLERANDWPAQLSGGQRQRVALARALVHRPQLLLLDEPLGALDALTRIEMHALIERLWREHRFTALLVTHDVHEAVALGDRILLIEEGRIALDQPVPLARPRARASAGFAALEEHVLQRVLKTAPNDDALSDGAYDARDEGRARRPTDVRWAV.

The interval 44 to 72 is disordered; the sequence is THHHARVAAQGHARGDAQPPAGALARDDG. Positions 80-299 constitute an ABC transporter domain; it reads VQLRGVGKRY…ARASAGFAAL (220 aa). 112 to 119 is a binding site for ATP; the sequence is GRSGCGKS.

It belongs to the ABC transporter superfamily. Aliphatic sulfonates importer (TC 3.A.1.17.2) family. The complex is composed of two ATP-binding proteins (SsuB), two transmembrane proteins (SsuC) and a solute-binding protein (SsuA).

The protein resides in the cell inner membrane. The catalysed reaction is ATP + H2O + aliphatic sulfonate-[sulfonate-binding protein]Side 1 = ADP + phosphate + aliphatic sulfonateSide 2 + [sulfonate-binding protein]Side 1.. In terms of biological role, part of the ABC transporter complex SsuABC involved in aliphatic sulfonates import. Responsible for energy coupling to the transport system. The chain is Aliphatic sulfonates import ATP-binding protein SsuB 1 from Paraburkholderia xenovorans (strain LB400).